The chain runs to 547 residues: Chaperonin GroEL (547 aa).

ATP-binding positions include 30–33 (TLGP), Lys51, 87–91 (DGTTT), Gly415, and Asp496.

The protein belongs to the chaperonin (HSP60) family. As to quaternary structure, forms a cylinder of 14 subunits composed of two heptameric rings stacked back-to-back. Interacts with the co-chaperonin GroES.

It localises to the cytoplasm. It carries out the reaction ATP + H2O + a folded polypeptide = ADP + phosphate + an unfolded polypeptide.. Functionally, together with its co-chaperonin GroES, plays an essential role in assisting protein folding. The GroEL-GroES system forms a nano-cage that allows encapsulation of the non-native substrate proteins and provides a physical environment optimized to promote and accelerate protein folding. This is Chaperonin GroEL from Actinobacillus pleuropneumoniae (Haemophilus pleuropneumoniae).